Here is an 805-residue protein sequence, read N- to C-terminus: Leucine--tRNA ligase (805 aa).

The 'HIGH' region motif lies at 40 to 51 (PYPSGAGLHVGH). The 'KMSKS' region signature appears at 576–580 (KMSKS). Residue Lys-579 coordinates ATP.

This sequence belongs to the class-I aminoacyl-tRNA synthetase family.

Its subcellular location is the cytoplasm. It catalyses the reaction tRNA(Leu) + L-leucine + ATP = L-leucyl-tRNA(Leu) + AMP + diphosphate. The chain is Leucine--tRNA ligase from Brevibacillus brevis (strain 47 / JCM 6285 / NBRC 100599).